Here is a 69-residue protein sequence, read N- to C-terminus: Large ribosomal subunit protein uL29 (69 aa).

It belongs to the universal ribosomal protein uL29 family.

This chain is Large ribosomal subunit protein uL29, found in Staphylococcus saprophyticus subsp. saprophyticus (strain ATCC 15305 / DSM 20229 / NCIMB 8711 / NCTC 7292 / S-41).